The sequence spans 208 residues: UPF0301 protein MAB_4928c (208 aa).

Belongs to the UPF0301 (AlgH) family.

This is UPF0301 protein MAB_4928c from Mycobacteroides abscessus (strain ATCC 19977 / DSM 44196 / CCUG 20993 / CIP 104536 / JCM 13569 / NCTC 13031 / TMC 1543 / L948) (Mycobacterium abscessus).